We begin with the raw amino-acid sequence, 232 residues long: Ribonuclease 3 (232 aa).

The RNase III domain occupies 6-133 (FNDIENRLGV…VIAAVYLDKG (128 aa)). Residue Glu46 coordinates Mg(2+). The active site involves Asp50. Mg(2+)-binding residues include Asp119 and Glu122. The active site involves Glu122. The 70-residue stretch at 160–229 (DFKTKLQELL…AKEALKRLEK (70 aa)) folds into the DRBM domain.

It belongs to the ribonuclease III family. Homodimer. It depends on Mg(2+) as a cofactor.

It is found in the cytoplasm. The enzyme catalyses Endonucleolytic cleavage to 5'-phosphomonoester.. Functionally, digests double-stranded RNA. Involved in the processing of primary rRNA transcript to yield the immediate precursors to the large and small rRNAs (23S and 16S). Processes some mRNAs, and tRNAs when they are encoded in the rRNA operon. Processes pre-crRNA and tracrRNA of type II CRISPR loci if present in the organism. The protein is Ribonuclease 3 of Clostridium botulinum (strain Eklund 17B / Type B).